Consider the following 534-residue polypeptide: Glucans biosynthesis protein D (534 aa).

The tat-type signal signal peptide spans 1–26 (MQRRDFIRNASLALAAFGLPSLPACA).

Belongs to the OpgD/OpgG family. Post-translationally, predicted to be exported by the Tat system. The position of the signal peptide cleavage has not been experimentally proven.

It localises to the periplasm. It functions in the pathway glycan metabolism; osmoregulated periplasmic glucan (OPG) biosynthesis. Functionally, probably involved in the control of the structural glucose backbone of osmoregulated periplasmic glucans (OPGs). The polypeptide is Glucans biosynthesis protein D (Stenotrophomonas maltophilia (strain K279a)).